The sequence spans 344 residues: Lipase chaperone (344 aa).

The helical transmembrane segment at 13 to 35 (RIAPYGAAGLAAIVGVAIWSGTG) threads the bilayer.

The protein belongs to the lipase chaperone family.

Its subcellular location is the cell inner membrane. May be involved in the folding of the extracellular lipase during its passage through the periplasm. In Burkholderia vietnamiensis (strain G4 / LMG 22486) (Burkholderia cepacia (strain R1808)), this protein is Lipase chaperone.